Consider the following 364-residue polypeptide: Fructose-bisphosphate aldolase B (364 aa).

Ala2 bears the N-acetylalanine mark. An N6-succinyllysine modification is found at Lys13. Residue Ser36 is modified to Phosphoserine. Residue Thr39 is modified to Phosphothreonine. Arg43 is a binding site for beta-D-fructose 1,6-bisphosphate. Phosphothreonine is present on Thr119. An N6-succinyllysine modification is found at Lys121. Ser132 is modified (phosphoserine). Glu188 functions as the Proton acceptor in the catalytic mechanism. Lys230 acts as the Schiff-base intermediate with dihydroxyacetone-P in catalysis. Phosphoserine occurs at positions 272, 276, 299, and 301. 272-274 serves as a coordination point for beta-D-fructose 1,6-bisphosphate; sequence SGG. Arg304 contributes to the beta-D-fructose 1,6-bisphosphate binding site. Ser309 carries the phosphoserine modification. At Lys317 the chain carries N6-succinyllysine.

Belongs to the class I fructose-bisphosphate aldolase family. Homotetramer. Interacts with BBS1, BBS2, BBS4 and BBS7. Forms a ternary complex with G6PD and TP53; this interaction is direct.

Its subcellular location is the cytoplasm. It localises to the cytosol. It is found in the cytoskeleton. The protein resides in the microtubule organizing center. The protein localises to the centrosome. Its subcellular location is the centriolar satellite. It carries out the reaction beta-D-fructose 1,6-bisphosphate = D-glyceraldehyde 3-phosphate + dihydroxyacetone phosphate. It catalyses the reaction beta-D-fructose 1-phosphate = D-glyceraldehyde + dihydroxyacetone phosphate. Its pathway is carbohydrate degradation; glycolysis; D-glyceraldehyde 3-phosphate and glycerone phosphate from D-glucose: step 4/4. It functions in the pathway carbohydrate biosynthesis; gluconeogenesis. It participates in carbohydrate metabolism; fructose metabolism. Functionally, catalyzes the aldol cleavage of fructose 1,6-biphosphate to form two triosephosphates dihydroxyacetone phosphate and D-glyceraldehyde 3-phosphate in glycolysis as well as the reverse stereospecific aldol addition reaction in gluconeogenesis. In fructolysis, metabolizes fructose 1-phosphate derived from the phosphorylation of dietary fructose by fructokinase into dihydroxyacetone phosphate and D-glyceraldehyde. Acts as an adapter independently of its enzymatic activity, exerts a tumor suppressor role by stabilizing the ternary complex with G6PD and TP53 to inhibit G6PD activity and keep oxidative pentose phosphate metabolism in check. The protein is Fructose-bisphosphate aldolase B (ALDOB) of Bos taurus (Bovine).